Consider the following 990-residue polypeptide: Glycine dehydrogenase (decarboxylating) (990 aa).

Lys726 is modified (N6-(pyridoxal phosphate)lysine).

This sequence belongs to the GcvP family. As to quaternary structure, the glycine cleavage system is composed of four proteins: P, T, L and H. Requires pyridoxal 5'-phosphate as cofactor.

The enzyme catalyses N(6)-[(R)-lipoyl]-L-lysyl-[glycine-cleavage complex H protein] + glycine + H(+) = N(6)-[(R)-S(8)-aminomethyldihydrolipoyl]-L-lysyl-[glycine-cleavage complex H protein] + CO2. Functionally, the glycine cleavage system catalyzes the degradation of glycine. The P protein binds the alpha-amino group of glycine through its pyridoxal phosphate cofactor; CO(2) is released and the remaining methylamine moiety is then transferred to the lipoamide cofactor of the H protein. The protein is Glycine dehydrogenase (decarboxylating) of Rhodopseudomonas palustris (strain ATCC BAA-98 / CGA009).